Here is a 422-residue protein sequence, read N- to C-terminus: UDP-N-acetylglucosamine 1-carboxyvinyltransferase (422 aa).

Position 22-23 (22-23) interacts with phosphoenolpyruvate; that stretch reads KN. Arginine 92 is a binding site for UDP-N-acetyl-alpha-D-glucosamine. Cysteine 116 (proton donor) is an active-site residue. Cysteine 116 bears the 2-(S-cysteinyl)pyruvic acid O-phosphothioketal mark. Residues 121–125, aspartate 307, and leucine 329 contribute to the UDP-N-acetyl-alpha-D-glucosamine site; that span reads RPIDL.

It belongs to the EPSP synthase family. MurA subfamily.

It is found in the cytoplasm. It carries out the reaction phosphoenolpyruvate + UDP-N-acetyl-alpha-D-glucosamine = UDP-N-acetyl-3-O-(1-carboxyvinyl)-alpha-D-glucosamine + phosphate. It participates in cell wall biogenesis; peptidoglycan biosynthesis. Functionally, cell wall formation. Adds enolpyruvyl to UDP-N-acetylglucosamine. The protein is UDP-N-acetylglucosamine 1-carboxyvinyltransferase of Sulfurovum sp. (strain NBC37-1).